Reading from the N-terminus, the 195-residue chain is A-type ATP synthase subunit E (195 aa).

Belongs to the V-ATPase E subunit family. Has multiple subunits with at least A(3), B(3), C, D, E, F, H, I and proteolipid K(x).

Its subcellular location is the cell membrane. Component of the A-type ATP synthase that produces ATP from ADP in the presence of a proton gradient across the membrane. This chain is A-type ATP synthase subunit E, found in Staphylothermus marinus (strain ATCC 43588 / DSM 3639 / JCM 9404 / F1).